Here is a 302-residue protein sequence, read N- to C-terminus: N-acetylmuramic acid 6-phosphate etherase (302 aa).

The SIS domain occupies 55–218 (AYPKFDQGGR…STGIMVKSGK (164 aa)). The active-site Proton donor is E83. E114 is an active-site residue.

The protein belongs to the GCKR-like family. MurNAc-6-P etherase subfamily. Homodimer.

The catalysed reaction is N-acetyl-D-muramate 6-phosphate + H2O = N-acetyl-D-glucosamine 6-phosphate + (R)-lactate. It participates in amino-sugar metabolism; N-acetylmuramate degradation. Functionally, specifically catalyzes the cleavage of the D-lactyl ether substituent of MurNAc 6-phosphate, producing GlcNAc 6-phosphate and D-lactate. In Levilactobacillus brevis (strain ATCC 367 / BCRC 12310 / CIP 105137 / JCM 1170 / LMG 11437 / NCIMB 947 / NCTC 947) (Lactobacillus brevis), this protein is N-acetylmuramic acid 6-phosphate etherase.